Consider the following 565-residue polypeptide: Periplasmic trehalase (565 aa).

Positions 1–30 are cleaved as a signal peptide; that stretch reads MKSPAPSRPQKMALIPACIFLYFAALSVQA. Substrate is bound by residues Arg-152, 159–160, Asn-196, 205–207, 277–279, and Gly-310; these read WD, RSQ, and RPE. Catalysis depends on proton donor/acceptor residues Asp-312 and Glu-496. Glu-511 is a substrate binding site. Positions 540-565 are disordered; the sequence is DNVPATHPTVKSATTQPSTKEAQPTP. Positions 548 to 565 are enriched in polar residues; that stretch reads TVKSATTQPSTKEAQPTP.

The protein belongs to the glycosyl hydrolase 37 family. As to quaternary structure, monomer.

It localises to the periplasm. The enzyme catalyses alpha,alpha-trehalose + H2O = alpha-D-glucose + beta-D-glucose. Provides the cells with the ability to utilize trehalose at high osmolarity by splitting it into glucose molecules that can subsequently be taken up by the phosphotransferase-mediated uptake system. This chain is Periplasmic trehalase, found in Shigella flexneri serotype 5b (strain 8401).